A 388-amino-acid polypeptide reads, in one-letter code: Dual-specificity RNA methyltransferase RlmN (388 aa).

Glu-109 (proton acceptor) is an active-site residue. One can recognise a Radical SAM core domain in the interval 115-354 (EDDRATLCVS…TIVRKTRGDD (240 aa)). Cys-122 and Cys-359 are disulfide-bonded. [4Fe-4S] cluster is bound by residues Cys-129, Cys-133, and Cys-136. S-adenosyl-L-methionine is bound by residues 183-184 (GE), Ser-215, 237-239 (SLH), and Asn-316. Cys-359 (S-methylcysteine intermediate) is an active-site residue.

The protein belongs to the radical SAM superfamily. RlmN family. The cofactor is [4Fe-4S] cluster.

The protein localises to the cytoplasm. The enzyme catalyses adenosine(2503) in 23S rRNA + 2 reduced [2Fe-2S]-[ferredoxin] + 2 S-adenosyl-L-methionine = 2-methyladenosine(2503) in 23S rRNA + 5'-deoxyadenosine + L-methionine + 2 oxidized [2Fe-2S]-[ferredoxin] + S-adenosyl-L-homocysteine. It catalyses the reaction adenosine(37) in tRNA + 2 reduced [2Fe-2S]-[ferredoxin] + 2 S-adenosyl-L-methionine = 2-methyladenosine(37) in tRNA + 5'-deoxyadenosine + L-methionine + 2 oxidized [2Fe-2S]-[ferredoxin] + S-adenosyl-L-homocysteine. In terms of biological role, specifically methylates position 2 of adenine 2503 in 23S rRNA and position 2 of adenine 37 in tRNAs. m2A2503 modification seems to play a crucial role in the proofreading step occurring at the peptidyl transferase center and thus would serve to optimize ribosomal fidelity. This Salmonella typhi protein is Dual-specificity RNA methyltransferase RlmN.